The primary structure comprises 243 residues: tRNA pseudouridine synthase A (243 aa).

Asp-54 acts as the Nucleophile in catalysis. Tyr-112 contacts substrate.

The protein belongs to the tRNA pseudouridine synthase TruA family. As to quaternary structure, homodimer.

The enzyme catalyses uridine(38/39/40) in tRNA = pseudouridine(38/39/40) in tRNA. Its function is as follows. Formation of pseudouridine at positions 38, 39 and 40 in the anticodon stem and loop of transfer RNAs. In Onion yellows phytoplasma (strain OY-M), this protein is tRNA pseudouridine synthase A.